Consider the following 865-residue polypeptide: AdoMet-dependent rRNA methyltransferase SPB1 (865 aa).

The S-adenosyl-L-methionine site is built by G56, W58, D76, D92, and D117. Residue K157 is the Proton acceptor of the active site. 2 coiled-coil regions span residues 358-400 and 462-492; these read ESMD…VRMQ and GETD…RKAA. Disordered stretches follow at residues 370-396 and 443-676; these read LEKL…QKDI and VVAS…TKDG. Basic and acidic residues predominate over residues 386–396; it reads RKENERKQKDI. The span at 463–483 shows a compositional bias: acidic residues; sequence ETDDESDEELDRLETELDDMY. The span at 484–497 shows a compositional bias: basic and acidic residues; it reads DQFRERKAASDAKY. Over residues 526 to 545 the composition is skewed to acidic residues; sequence ISDDSELEEESSGDSDDEDD. Residues 556 to 566 show a composition bias toward polar residues; it reads LDTTPSDNSGL. The segment covering 600-609 has biased composition (acidic residues); sequence GEDEDADMED. Basic and acidic residues-rich tracts occupy residues 610–627 and 659–676; these read TVSK…ADKK and KSGK…TKDG. A coiled-coil region spans residues 762-789; sequence REAKGRKKMKAAQRLEKLKKKSDLLVNE.

The protein belongs to the class I-like SAM-binding methyltransferase superfamily. RNA methyltransferase RlmE family. SPB1 subfamily. As to quaternary structure, component of the nucleolar and nucleoplasmic pre-60S ribosomal particle.

The protein resides in the nucleus. Its subcellular location is the nucleolus. The enzyme catalyses a ribonucleotide in rRNA + S-adenosyl-L-methionine = a 2'-O-methylribonucleotide in rRNA + S-adenosyl-L-homocysteine + H(+). In terms of biological role, required for proper assembly of pre-ribosomal particles during the biogenesis of the 60S ribosomal subunit. The sequence is that of AdoMet-dependent rRNA methyltransferase SPB1 from Pyricularia oryzae (strain 70-15 / ATCC MYA-4617 / FGSC 8958) (Rice blast fungus).